Reading from the N-terminus, the 301-residue chain is Ribonuclease Z (301 aa).

Residues His63, His65, Asp67, His68, His141, Asp204, and His262 each coordinate Zn(2+). The Proton acceptor role is filled by Asp67.

The protein belongs to the RNase Z family. As to quaternary structure, homodimer. It depends on Zn(2+) as a cofactor.

The catalysed reaction is Endonucleolytic cleavage of RNA, removing extra 3' nucleotides from tRNA precursor, generating 3' termini of tRNAs. A 3'-hydroxy group is left at the tRNA terminus and a 5'-phosphoryl group is left at the trailer molecule.. In terms of biological role, zinc phosphodiesterase, which displays some tRNA 3'-processing endonuclease activity. Probably involved in tRNA maturation, by removing a 3'-trailer from precursor tRNA. This is Ribonuclease Z from Streptomyces coelicolor (strain ATCC BAA-471 / A3(2) / M145).